A 150-amino-acid polypeptide reads, in one-letter code: MTKTMMIFAAAMTVMALLLVPTIEAQTECVSKLVPCFNDLNTTTTPVKECCDSIKEAVEKELTCLCTIYTSPGLLAQFNVTTEKALGLSRRCNVTTDLSACTAKGAPSPKASLPPPAPAGNTKKDAGAGNKLAGYGVTTVILSLISSIFF.

Residues 1–25 (MTKTMMIFAAAMTVMALLLVPTIEA) form the signal peptide. Cystine bridges form between Cys29–Cys66, Cys36–Cys50, Cys51–Cys92, and Cys64–Cys101. N-linked (GlcNAc...) asparagine glycans are attached at residues Asn41, Asn79, and Asn93. A disordered region spans residues 103 to 125 (AKGAPSPKASLPPPAPAGNTKKD). Asp125 carries GPI-anchor amidated aspartate lipidation. Residues 126 to 150 (AGAGNKLAGYGVTTVILSLISSIFF) constitute a propeptide, removed in mature form.

It belongs to the plant LTP family. As to expression, up-regulated in the epidermis of stems.

It localises to the cell membrane. Probable lipid transfer protein. The chain is Non-specific lipid transfer protein GPI-anchored 7 from Arabidopsis thaliana (Mouse-ear cress).